We begin with the raw amino-acid sequence, 262 residues long: Biotin carboxyl carrier protein of acetyl-CoA carboxylase, chloroplastic (262 aa).

The transit peptide at M1 to A47 directs the protein to the chloroplast. 2 disordered regions span residues A53–S84 and I125–L185. Positions P132–T160 are enriched in pro residues. Residues P161 to L185 are compositionally biased toward low complexity. The Biotinyl-binding domain occupies L185–Q261. Residue K227 is modified to N6-biotinyllysine.

The protein resides in the plastid. The protein localises to the chloroplast. It functions in the pathway lipid metabolism; fatty acid biosynthesis. Its function is as follows. This protein is a component of the acetyl coenzyme A carboxylase complex; first, biotin carboxylase catalyzes the carboxylation of the carrier protein and then the transcarboxylase transfers the carboxyl group to form malonyl-CoA. The chain is Biotin carboxyl carrier protein of acetyl-CoA carboxylase, chloroplastic (ACCB-1) from Glycine max (Soybean).